The following is a 418-amino-acid chain: Ig-like V-type domain-containing protein FAM187A (418 aa).

A signal peptide spans 1 to 18 (MRLAPTTVLLWAWGSLQA). Residues 19–376 (FEIVEKENIF…ASLSDPETRT (358 aa)) lie on the Extracellular side of the membrane. The region spanning 267 to 361 (PWVPQVPIQF…IAGFRLGVTS (95 aa)) is the Ig-like V-type domain. Residues cysteine 289 and cysteine 345 are joined by a disulfide bond. An N-linked (GlcNAc...) asparagine glycan is attached at asparagine 317. A helical transmembrane segment spans residues 377 to 397 (AVELTLIGYLLIAVVFVTIHL). Residues 398–418 (CRCCCQSRCCPNFSAQTLLQL) are Cytoplasmic-facing.

It belongs to the FAM187 family.

The protein resides in the membrane. The sequence is that of Ig-like V-type domain-containing protein FAM187A (Fam187a) from Rattus norvegicus (Rat).